The following is a 461-amino-acid chain: MNMHIVSPVLLLFWFGIIVTDGKLKSGFIGGSHHHEVNPIEGILRESLRSNRVQACDGERITLSCPRNTQISVQTGFYGRVVPENQLCPPQAGRKHSEANLDPLSMIHHSSTCDVIQAHTRISELCDKRRKCTVVVDSNTFEDDPCPTTSKYLQMAYGCIPMSFDEETFCTPKPTDPPRPEIRLECREGRRLAVYSAQMKTSPQCDPETEIRHECVSDVLPQVLRQCHAKEGCTLKSDGIKGHCRHGHLHVVYVCVNEEIFSEEAIKGELTSLETYLKEADAMQKQDDERFFKDVNDKTQWERVVDSEPAKDPDVHQIANDASYVTHDEYRMEKQDPPPITERVEPNLVGVGHDLLQVVQFFKENKEKAVMCIVLAVSMAAIVVLSACIITRLCSSNKDSSRSSRRSRSRRSLETSKLVSSNYGGSITPQHMMQDIEDEQFLRFSMGSAATSNPHYSHYDF.

A signal peptide spans 1–22; it reads MNMHIVSPVLLLFWFGIIVTDG. Positions 55–160 constitute an SUEL-type lectin domain; it reads ACDGERITLS…KYLQMAYGCI (106 aa). A helical transmembrane segment spans residues 370-390; that stretch reads VMCIVLAVSMAAIVVLSACII. The tract at residues 397 to 429 is disordered; it reads NKDSSRSSRRSRSRRSLETSKLVSSNYGGSITP. The span at 415–429 shows a compositional bias: polar residues; sequence TSKLVSSNYGGSITP.

It belongs to the EVA1 family. As to quaternary structure, interacts with sax-3. Interacts with slt-1. Interacts (via the SUEL-type lectin domain) with madd-4. Interacts (via the transmembrane domain) with unc-40.

The protein resides in the cell membrane. In terms of biological role, acts as a receptor for slt-1. Required for the guidance of the AVM pioneer axon to the ventral nerve cord. Acts as a unc-40 coreceptor to enhance the sensitivity of unc-40 to the madd-4 midline guidance cue to guide muscle arm extensions (muscle arms) and AVM mechanosensory axons towards the dorsoventral midline. In Caenorhabditis elegans, this protein is Protein eva-1 (eva-1).